Here is a 59-residue protein sequence, read N- to C-terminus: Light-harvesting protein B-800-850 alpha chain A (59 aa).

Residues 1–11 (MNQARIWTVVK) are Cytoplasmic-facing. Residues 12–35 (PTVGLPLLLGSVTVIAILVHFAVL) traverse the membrane as a helical segment. Histidine 31 serves as a coordination point for a bacteriochlorophyll. At 36-59 (SHTTWFSKYWNGKAAAIESSVNVG) the chain is on the periplasmic side.

The protein belongs to the antenna complex alpha subunit family. As to quaternary structure, the core complex is formed by different alpha and beta chains, binding bacteriochlorophyll molecules, and arranged most probably in tetrameric structures disposed around the reaction center. The non-pigmented gamma chains may constitute additional components.

It is found in the cell inner membrane. Antenna complexes are light-harvesting systems, which transfer the excitation energy to the reaction centers. The sequence is that of Light-harvesting protein B-800-850 alpha chain A (pucAA) from Rhodopseudomonas palustris (strain ATCC BAA-98 / CGA009).